The primary structure comprises 337 residues: Integrase/recombinase (337 aa).

Positions 14 to 94 (VKVLDQLRER…ALLFFYGKVL (81 aa)) constitute a Core-binding (CB) domain. The Tyr recombinase domain maps to 112–328 (RLPVVLTPDE…GGAGVRSPLD (217 aa)). Active-site residues include R146, K171, H277, R280, and H303. Residue Y312 is the O-(3'-phospho-DNA)-tyrosine intermediate of the active site.

The protein belongs to the 'phage' integrase family.

Functionally, putative integrase believed to be involved in the insertion of antibiotic resistance genes into plasmids and transposons. The protein is Integrase/recombinase (int) of Escherichia coli.